Reading from the N-terminus, the 300-residue chain is Light-independent protochlorophyllide reductase iron-sulfur ATP-binding protein (300 aa).

Residues 10-15 and Lys-39 each bind ATP; that span reads GIGKST. A Mg(2+)-binding site is contributed by Ser-14. Residues Cys-95 and Cys-129 each coordinate [4Fe-4S] cluster. 180-181 lines the ATP pocket; the sequence is NR.

Belongs to the NifH/BchL/ChlL family. As to quaternary structure, homodimer. Protochlorophyllide reductase is composed of three subunits; ChlL, ChlN and ChlB. The cofactor is [4Fe-4S] cluster.

The protein localises to the plastid. The protein resides in the chloroplast. The enzyme catalyses chlorophyllide a + oxidized 2[4Fe-4S]-[ferredoxin] + 2 ADP + 2 phosphate = protochlorophyllide a + reduced 2[4Fe-4S]-[ferredoxin] + 2 ATP + 2 H2O. It functions in the pathway porphyrin-containing compound metabolism; chlorophyll biosynthesis (light-independent). Functionally, component of the dark-operative protochlorophyllide reductase (DPOR) that uses Mg-ATP and reduced ferredoxin to reduce ring D of protochlorophyllide (Pchlide) to form chlorophyllide a (Chlide). This reaction is light-independent. The L component serves as a unique electron donor to the NB-component of the complex, and binds Mg-ATP. The sequence is that of Light-independent protochlorophyllide reductase iron-sulfur ATP-binding protein from Auxenochlorella protothecoides (Green microalga).